Reading from the N-terminus, the 453-residue chain is Aldehyde dehydrogenase, dimeric NADP-preferring (453 aa).

Ser-2 carries the N-acetylserine modification. Lys-178 carries the post-translational modification N6-acetyllysine. Gly-188–Gly-193 serves as a coordination point for NAD(+). Lys-194 carries the N6-acetyllysine modification. Active-site residues include Glu-210 and Cys-244.

It belongs to the aldehyde dehydrogenase family. Homodimer. In terms of tissue distribution, constitutively expressed in cornea, stomach, skin, bladder and lungs. Lowest expression levels in lungs and bladder.

The protein resides in the cytoplasm. The enzyme catalyses an aldehyde + NAD(+) + H2O = a carboxylate + NADH + 2 H(+). The catalysed reaction is octanal + NAD(+) + H2O = octanoate + NADH + 2 H(+). In terms of biological role, ALDHs play a major role in the detoxification of alcohol-derived acetaldehyde. They are involved in the metabolism of corticosteroids, biogenic amines, neurotransmitters, and lipid peroxidation. Oxidizes medium and long chain aldehydes into non-toxic fatty acids. Preferentially oxidizes aromatic aldehyde substrates. Comprises about 50 percent of corneal epithelial soluble proteins. May play a role in preventing corneal damage caused by ultraviolet light. This Mus musculus (Mouse) protein is Aldehyde dehydrogenase, dimeric NADP-preferring (Aldh3a1).